The following is a 67-amino-acid chain: Ubiquinol-cytochrome c reductase complex assembly factor 6 (67 aa).

At 1–8 the chain is on the mitochondrial matrix side; sequence MPGGVPWS. A helical; Signal-anchor for type II membrane protein transmembrane segment spans residues 9 to 25; the sequence is AYLKMLSSSLLAMCAGA. At 26–67 the chain is on the mitochondrial intermembrane side; that stretch reads QVVHWYYRPDLTIPEIPPKPGELKTELLGLKERRHEPHVSQQ.

The protein belongs to the UQCC6 family. Interacts with UQCRC1. Interacts with UQCRQ. Interacts with UQCC5. Forms a complex, named COMB/coordinator of mitochondrial CYTB biogenesis, composed of UQCC1, UQCC2, UQCC4, UQCC5 and UQCC6; stabilizes nascent cytochrome b/MT-CYB and promotes its membrane insertion. Forms a complex, named COMA, composed of UQCC1, UQCC2 and UQCC4; activates MT-CYB translation. Forms a complex, named COMC, composed of UQCC1, UQCC2; UQCC3 and UQCC4; mediates MT-CYB hemylation and association with the first nuclear-encoded complex III subunit UQCRQ. Interacts with MT-CYB. In terms of tissue distribution, highly expressed in brown adipose, cardiac and skeletal muscle (at protein level).

It localises to the mitochondrion inner membrane. Required for the assembly and stability of the mitochondrial ubiquinol-cytochrome c reductase complex (complex III or cytochrome b-c1 complex), a multisubunit transmembrane complex that is part of the mitochondrial electron transport chain (ETC) which drives oxidative phosphorylation. Mediates early complex III biogenesis. Participates in regulating the levels of electron transport chain proteins, and therefore energy supply, in response to changes in energy demand. Also required for cytochrome c oxidase complex (complex IV) assembly. The sequence is that of Ubiquinol-cytochrome c reductase complex assembly factor 6 from Mus musculus (Mouse).